A 631-amino-acid chain; its full sequence is Cyclic nucleotide-gated channel alpha-3 (631 aa).

The span at 1–18 (MAKVNTQCSQPSPTQLSI) shows a compositional bias: polar residues. 2 disordered regions span residues 1–21 (MAKV…IKNA) and 71–98 (EVST…RKEE). Over 1-111 (MAKVNTQCSQ…VDPSSNIYYR (111 aa)) the chain is Cytoplasmic. A compositionally biased stretch (basic and acidic residues) spans 87 to 98 (KPPDGGEGRKEE). A helical transmembrane segment spans residues 112–133 (WLTAIALPVFYNWCLLVCRACF). Residues 134–139 (DELQSE) lie on the Extracellular side of the membrane. The helical transmembrane segment at 140 to 160 (HLTLWLVLDYSADVLYVLDML) threads the bilayer. At 161–187 (VRARTGFLEQGLMVRDTKRLWKHYTKT) the chain is on the cytoplasmic side. Residues 188 to 207 (LHFKLDILSLIPTDLAYLKL) traverse the membrane as a helical segment. Residues 208–211 (GVNY) lie on the Extracellular side of the membrane. Residues 212–229 (PELRFNRLLKFSRLFEFF) traverse the membrane as a helical segment. Over 230-239 (DRTETRTNYP) the chain is Cytoplasmic. The tract at residues 239–347 (PNVFRIGNLV…GNVGSMISNM (109 aa)) is ion conduction pathway. Residues 240-262 (NVFRIGNLVLYTLIIIHWNACIY) form a helical membrane-spanning segment. The Extracellular segment spans residues 263-288 (FAISKFIGFGTDSWVYPNTSKPEYAR). N-linked (GalNAc...) asparagine glycosylation occurs at N280. The next 2 helical transmembrane spans lie at 289–319 (LSRK…DEEY) and 320–344 (LFVV…GSMI). A selectivity filter region spans residues 306–309 (TIGE). Residues 345–631 (SNMNAPRVEF…ENSEDASKTD (287 aa)) are Cytoplasmic-facing. The segment at 349 to 426 (APRVEFQAKI…TLKKVRIFQD (78 aa)) is C-linker. Residues 429-549 (AGLLVELVLK…EEKGRQILMK (121 aa)) are cyclic nucleotide-binding domain. G489, E490, S492, R505, T506, and D550 together coordinate 3',5'-cyclic GMP. The stretch at 567 to 610 (VEEKVEYLESSLDILQTRFARLLAEYSASQMKLKQRLTRLESQM) forms a coiled coil.

This sequence belongs to the cyclic nucleotide-gated cation channel (TC 1.A.1.5) family. CNGA3 subfamily. In terms of assembly, forms heterotetrameric channels composed of CNGA3 and CNGB3 subunits with 3:1 stoichiometry. Prominently expressed in retina.

The protein localises to the cell membrane. The enzyme catalyses Ca(2+)(in) = Ca(2+)(out). It carries out the reaction Na(+)(in) = Na(+)(out). The catalysed reaction is K(+)(in) = K(+)(out). It catalyses the reaction NH4(+)(in) = NH4(+)(out). The enzyme catalyses Rb(+)(in) = Rb(+)(out). It carries out the reaction Li(+)(in) = Li(+)(out). The catalysed reaction is Cs(+)(in) = Cs(+)(out). Functionally, pore-forming subunit of the cone cyclic nucleotide-gated channel. Mediates cone photoresponses at bright light converting transient changes in intracellular cGMP levels into electrical signals. In the dark, cGMP levels are high and keep the channel open enabling a steady inward current carried by Na(+) and Ca(2+) ions that leads to membrane depolarization and neurotransmitter release from synaptic terminals. Upon photon absorption cGMP levels decline leading to channel closure and membrane hyperpolarization that ultimately slows neurotransmitter release and signals the presence of light, the end point of the phototransduction cascade. Pore-forming subunit of the gustatory cyclic nucleotide-gated channel. In the taste buds, may sense oral extracellular pH and conduct ion currents that modulate the excitability of taste cells. Conducts cGMP- and cAMP-gated ion currents, with permeability for monovalent and divalent cations. The polypeptide is Cyclic nucleotide-gated channel alpha-3 (Mus musculus (Mouse)).